Consider the following 257-residue polypeptide: Imidazole glycerol phosphate synthase subunit HisF (257 aa).

Catalysis depends on residues D12 and D131.

This sequence belongs to the HisA/HisF family. In terms of assembly, heterodimer of HisH and HisF.

It is found in the cytoplasm. The enzyme catalyses 5-[(5-phospho-1-deoxy-D-ribulos-1-ylimino)methylamino]-1-(5-phospho-beta-D-ribosyl)imidazole-4-carboxamide + L-glutamine = D-erythro-1-(imidazol-4-yl)glycerol 3-phosphate + 5-amino-1-(5-phospho-beta-D-ribosyl)imidazole-4-carboxamide + L-glutamate + H(+). It participates in amino-acid biosynthesis; L-histidine biosynthesis; L-histidine from 5-phospho-alpha-D-ribose 1-diphosphate: step 5/9. Functionally, IGPS catalyzes the conversion of PRFAR and glutamine to IGP, AICAR and glutamate. The HisF subunit catalyzes the cyclization activity that produces IGP and AICAR from PRFAR using the ammonia provided by the HisH subunit. This is Imidazole glycerol phosphate synthase subunit HisF from Rhodococcus jostii (strain RHA1).